Reading from the N-terminus, the 97-residue chain is Large ribosomal subunit protein bL27 (97 aa).

The tract at residues 14–36 (HKKGGGSTSNGRDSQAKRLGAKA) is disordered.

The protein belongs to the bacterial ribosomal protein bL27 family.

This chain is Large ribosomal subunit protein bL27, found in Streptococcus sanguinis (strain SK36).